A 433-amino-acid chain; its full sequence is Serine--tRNA ligase (433 aa).

235-237 (TSE) is an L-serine binding site. Position 266-268 (266-268 (RSE)) interacts with ATP. An L-serine-binding site is contributed by glutamate 289. 353–356 (EISS) is a binding site for ATP. Serine 388 contacts L-serine.

It belongs to the class-II aminoacyl-tRNA synthetase family. Type-1 seryl-tRNA synthetase subfamily. Homodimer. The tRNA molecule binds across the dimer.

It localises to the cytoplasm. The enzyme catalyses tRNA(Ser) + L-serine + ATP = L-seryl-tRNA(Ser) + AMP + diphosphate + H(+). It catalyses the reaction tRNA(Sec) + L-serine + ATP = L-seryl-tRNA(Sec) + AMP + diphosphate + H(+). The protein operates within aminoacyl-tRNA biosynthesis; selenocysteinyl-tRNA(Sec) biosynthesis; L-seryl-tRNA(Sec) from L-serine and tRNA(Sec): step 1/1. Functionally, catalyzes the attachment of serine to tRNA(Ser). Is also able to aminoacylate tRNA(Sec) with serine, to form the misacylated tRNA L-seryl-tRNA(Sec), which will be further converted into selenocysteinyl-tRNA(Sec). This chain is Serine--tRNA ligase, found in Burkholderia ambifaria (strain ATCC BAA-244 / DSM 16087 / CCUG 44356 / LMG 19182 / AMMD) (Burkholderia cepacia (strain AMMD)).